We begin with the raw amino-acid sequence, 363 residues long: Aminomethyltransferase (363 aa).

This sequence belongs to the GcvT family. In terms of assembly, the glycine cleavage system is composed of four proteins: P, T, L and H.

The catalysed reaction is N(6)-[(R)-S(8)-aminomethyldihydrolipoyl]-L-lysyl-[protein] + (6S)-5,6,7,8-tetrahydrofolate = N(6)-[(R)-dihydrolipoyl]-L-lysyl-[protein] + (6R)-5,10-methylene-5,6,7,8-tetrahydrofolate + NH4(+). Functionally, the glycine cleavage system catalyzes the degradation of glycine. This chain is Aminomethyltransferase, found in Teredinibacter turnerae (strain ATCC 39867 / T7901).